The following is a 345-amino-acid chain: Phosphoribosylformylglycinamidine cyclo-ligase (345 aa).

This sequence belongs to the AIR synthase family.

It localises to the cytoplasm. It catalyses the reaction 2-formamido-N(1)-(5-O-phospho-beta-D-ribosyl)acetamidine + ATP = 5-amino-1-(5-phospho-beta-D-ribosyl)imidazole + ADP + phosphate + H(+). The protein operates within purine metabolism; IMP biosynthesis via de novo pathway; 5-amino-1-(5-phospho-D-ribosyl)imidazole from N(2)-formyl-N(1)-(5-phospho-D-ribosyl)glycinamide: step 2/2. This is Phosphoribosylformylglycinamidine cyclo-ligase from Salmonella typhi.